The primary structure comprises 555 residues: MALPKNGGNSSSTKKKVSYISVPSQIINSLSSSSLQSLLVSPKKSSRCTNRFSYRNPRIWFLTLFLVSLFGMLKLGLNVDPISLPFSRYPCSTGSFDEHHAVSHLAFASKNDTQSSSSSEHRKNETLPTEGDFWKQPDGLGFKPCLGFSRQYRKDSNSILKNRWKYLLVVVAGGMNQQRNQIVDAVIMARILGASLVVPVLQVNVIWGDESEFADIFDLEHFKNVLADDVHIVSSLPSTHVMTRPAEEKRTPLHASPQWIRAHYLKRINRERVLLLRGLDSRLSNDLPSDLQKLRCKVASQALRFSPRILELGNKLASRMLSEGQYLSLHLRMEKDVWVRTGSLPGLTPEYDEIVNSERQRHPELLTGRSNMTYNERKLAGLCPLTALEVTRLLKALEAPKDARIYWAGGEPLGGKEALEPLTKEFPHLYNKHDLALPGELEPFAKKASVMAAIDYIVCEKSDVFIPSHGGNMGHALQGQRAYAGHKKYITPNKRHMLPYFMNASLPESEFNRIVKDFHRESLGQPELRTGRGGKDVTKHPVSECMCSDRRQQQQ.

Residues 1-58 (MALPKNGGNSSSTKKKVSYISVPSQIINSLSSSSLQSLLVSPKKSSRCTNRFSYRNPR) lie on the Cytoplasmic side of the membrane. A helical; Signal-anchor for type II membrane protein transmembrane segment spans residues 59-79 (IWFLTLFLVSLFGMLKLGLNV). Over 80–555 (DPISLPFSRY…MCSDRRQQQQ (476 aa)) the chain is Lumenal. The segment at 110-130 (KNDTQSSSSSEHRKNETLPTE) is disordered. 2 N-linked (GlcNAc...) asparagine glycosylation sites follow: asparagine 111 and asparagine 124. 330–332 (HLR) serves as a coordination point for substrate. Asparagine 371 and asparagine 503 each carry an N-linked (GlcNAc...) asparagine glycan. The interval 525-555 (QPELRTGRGGKDVTKHPVSECMCSDRRQQQQ) is disordered. The segment covering 529–555 (RTGRGGKDVTKHPVSECMCSDRRQQQQ) has biased composition (basic and acidic residues).

It belongs to the glycosyltransferase GT106 family. As to expression, highly expressed in embryogenic microspore and in vegetative tissues.

Its subcellular location is the golgi apparatus membrane. It functions in the pathway glycan metabolism. Its function is as follows. May play a role in the biosynthesis of matrix polysaccharides and contribute to the biomechanics and development of the plant cell wall. The polypeptide is O-fucosyltransferase 20 (Brassica napus (Rape)).